The chain runs to 111 residues: uncharacterized protein (111 aa).

This is an uncharacterized protein from Escherichia coli (strain K12).